A 302-amino-acid chain; its full sequence is Ribosomal RNA small subunit methyltransferase H (302 aa).

S-adenosyl-L-methionine is bound by residues 43–45 (GGH), D62, F89, D105, and H112. The segment at 276–302 (EIANNPRSRSAKLRIAEKQAETGDEDN) is disordered.

Belongs to the methyltransferase superfamily. RsmH family.

Its subcellular location is the cytoplasm. It carries out the reaction cytidine(1402) in 16S rRNA + S-adenosyl-L-methionine = N(4)-methylcytidine(1402) in 16S rRNA + S-adenosyl-L-homocysteine + H(+). In terms of biological role, specifically methylates the N4 position of cytidine in position 1402 (C1402) of 16S rRNA. This chain is Ribosomal RNA small subunit methyltransferase H, found in Nostoc sp. (strain PCC 7120 / SAG 25.82 / UTEX 2576).